The following is a 355-amino-acid chain: Protein RecA (355 aa).

65–72 (GPESSGKT) serves as a coordination point for ATP.

It belongs to the RecA family.

It localises to the cytoplasm. In terms of biological role, can catalyze the hydrolysis of ATP in the presence of single-stranded DNA, the ATP-dependent uptake of single-stranded DNA by duplex DNA, and the ATP-dependent hybridization of homologous single-stranded DNAs. It interacts with LexA causing its activation and leading to its autocatalytic cleavage. This Pseudomonas entomophila (strain L48) protein is Protein RecA.